Reading from the N-terminus, the 327-residue chain is Type II methyltransferase M.HhaI (327 aa).

The region spanning 12 to 325 is the SAM-dependent MTase C5-type domain; the sequence is LRFIDLFAGL…YNIGSSLNFK (314 aa). C81 is a catalytic residue.

It belongs to the class I-like SAM-binding methyltransferase superfamily. C5-methyltransferase family. Monomer.

It catalyses the reaction a 2'-deoxycytidine in DNA + S-adenosyl-L-methionine = a 5-methyl-2'-deoxycytidine in DNA + S-adenosyl-L-homocysteine + H(+). A methylase, recognizes the double-stranded sequence 5'-GCGC-3', methylates C-2 on both strands, and protects the DNA from cleavage by the HhaI endonuclease. The polypeptide is Type II methyltransferase M.HhaI (hhaIM) (Haemophilus parahaemolyticus).